The following is an 865-amino-acid chain: Alanine--tRNA ligase (865 aa).

Residues H556, H560, C660, and H664 each contribute to the Zn(2+) site.

It belongs to the class-II aminoacyl-tRNA synthetase family. Zn(2+) serves as cofactor.

It localises to the cytoplasm. The catalysed reaction is tRNA(Ala) + L-alanine + ATP = L-alanyl-tRNA(Ala) + AMP + diphosphate. Its function is as follows. Catalyzes the attachment of alanine to tRNA(Ala) in a two-step reaction: alanine is first activated by ATP to form Ala-AMP and then transferred to the acceptor end of tRNA(Ala). Also edits incorrectly charged Ser-tRNA(Ala) and Gly-tRNA(Ala) via its editing domain. This chain is Alanine--tRNA ligase, found in Ruthia magnifica subsp. Calyptogena magnifica.